The chain runs to 334 residues: Nucleoid-associated protein VS_0951 (334 aa).

Belongs to the YejK family.

It is found in the cytoplasm. Its subcellular location is the nucleoid. The chain is Nucleoid-associated protein VS_0951 from Vibrio atlanticus (strain LGP32) (Vibrio splendidus (strain Mel32)).